Consider the following 23-residue polypeptide: Laccase-1 (23 aa).

It belongs to the multicopper oxidase family. Requires Cu cation as cofactor.

It localises to the secreted. It carries out the reaction 4 hydroquinone + O2 = 4 benzosemiquinone + 2 H2O. With respect to regulation, strongly inhibited by sodium azide, sodium cyanide, Li(+), Sn(+), Hg(2+), and the disulfide-reducing agents beta-mercaptoethanol, dithiothreitol and thioglycolic acid. Moderately inhibited by Mn(2+) and Fe(2+), inhibition by these metal ions is stronger at 0.1 mM than at 1 mM. Moderately inhibited by Cu(2+). Functionally, lignin degradation and detoxification of lignin-derived products. Demethylates eucalyptus hard wood lignin. Has high activity against the non-phenolic heterocyclic compound ABTS, and lower activity against the phenolic substrates syringic acid, caffeic acid, syringaldazine, vanillic acid, catechol and levodihydroxyphenylalanine. This Galerina sp protein is Laccase-1.